A 57-amino-acid polypeptide reads, in one-letter code: Insulin (57 aa).

Disulfide bonds link C12–C43, C24–C56, and C42–C47.

Belongs to the insulin family. As to quaternary structure, heterodimer of a B chain and an A chain linked by two disulfide bonds.

It is found in the secreted. Insulin decreases blood glucose concentration. It increases cell permeability to monosaccharides, amino acids and fatty acids. It accelerates glycolysis, the pentose phosphate cycle, and glycogen synthesis in liver. This chain is Insulin (ins), found in Lampetra fluviatilis (European river lamprey).